We begin with the raw amino-acid sequence, 183 residues long: Cell division protein ZapC (183 aa).

Belongs to the ZapC family. In terms of assembly, interacts directly with FtsZ.

Its subcellular location is the cytoplasm. Functionally, contributes to the efficiency of the cell division process by stabilizing the polymeric form of the cell division protein FtsZ. Acts by promoting interactions between FtsZ protofilaments and suppressing the GTPase activity of FtsZ. This chain is Cell division protein ZapC, found in Proteus mirabilis (strain HI4320).